A 72-amino-acid polypeptide reads, in one-letter code: Large ribosomal subunit protein bL28 (72 aa).

The protein belongs to the bacterial ribosomal protein bL28 family.

The protein is Large ribosomal subunit protein bL28 of Chlorobium phaeobacteroides (strain BS1).